We begin with the raw amino-acid sequence, 427 residues long: Succinate--CoA ligase [ADP-forming] subunit beta, mitochondrial (427 aa).

The transit peptide at 1 to 30 (MYSRKSLSLISKCGQLSRLNAQAALQARRH) directs the protein to the mitochondrion. The ATP-grasp domain maps to 39–284 (AQLLREYGIG…LSQEDPDEVK (246 aa)). Residues lysine 76 and 83–85 (GRG) each bind ATP. At serine 102 the chain carries Phosphoserine. Residue glutamate 144 coordinates ATP. Mg(2+)-binding residues include asparagine 236 and aspartate 253. Phosphoserine occurs at positions 263 and 276. Substrate contacts are provided by residues asparagine 304 and 361–363 (GIV).

It belongs to the succinate/malate CoA ligase beta subunit family. In terms of assembly, heterodimer of an alpha and a beta subunit. Mg(2+) serves as cofactor.

The protein localises to the mitochondrion. The enzyme catalyses succinate + ATP + CoA = succinyl-CoA + ADP + phosphate. It participates in carbohydrate metabolism; tricarboxylic acid cycle; succinate from succinyl-CoA (ligase route): step 1/1. Functionally, succinyl-CoA synthetase functions in the citric acid cycle (TCA), coupling the hydrolysis of succinyl-CoA to the synthesis of ATP and thus represents the only step of substrate-level phosphorylation in the TCA. The beta subunit provides nucleotide specificity of the enzyme and binds the substrate succinate, while the binding sites for coenzyme A and phosphate are found in the alpha subunit. The chain is Succinate--CoA ligase [ADP-forming] subunit beta, mitochondrial from Saccharomyces cerevisiae (strain ATCC 204508 / S288c) (Baker's yeast).